Reading from the N-terminus, the 159-residue chain is Ribosome maturation factor RimP (159 aa).

It belongs to the RimP family.

Its subcellular location is the cytoplasm. Required for maturation of 30S ribosomal subunits. The sequence is that of Ribosome maturation factor RimP from Geotalea uraniireducens (strain Rf4) (Geobacter uraniireducens).